The primary structure comprises 315 residues: D-alanine--D-alanine ligase (315 aa).

The ATP-grasp domain maps to 101–297 (KHIFRSLNID…FNELVKIIIE (197 aa)). 128–181 (KIDYPYVLKPINEGSSIGVYIIFSHEDYLELKNNSSTIMEKMIVEEYIPGIELH) provides a ligand contact to ATP. Positions 249, 263, and 265 each coordinate Mg(2+).

It belongs to the D-alanine--D-alanine ligase family. Mg(2+) is required as a cofactor. Mn(2+) serves as cofactor.

It is found in the cytoplasm. The enzyme catalyses 2 D-alanine + ATP = D-alanyl-D-alanine + ADP + phosphate + H(+). Its pathway is cell wall biogenesis; peptidoglycan biosynthesis. Its function is as follows. Cell wall formation. The polypeptide is D-alanine--D-alanine ligase (Wolbachia pipientis wMel).